Here is a 450-residue protein sequence, read N- to C-terminus: Phosphoglucosamine mutase (450 aa).

The active-site Phosphoserine intermediate is the S97. Residues S97, D236, D238, and D240 each coordinate Mg(2+). S97 is modified (phosphoserine).

Belongs to the phosphohexose mutase family. Requires Mg(2+) as cofactor. In terms of processing, activated by phosphorylation.

It carries out the reaction alpha-D-glucosamine 1-phosphate = D-glucosamine 6-phosphate. Functionally, catalyzes the conversion of glucosamine-6-phosphate to glucosamine-1-phosphate. In Prochlorococcus marinus (strain MIT 9215), this protein is Phosphoglucosamine mutase.